A 490-amino-acid chain; its full sequence is Cytochrome P450 2C2 (490 aa).

C435 lines the heme pocket.

Belongs to the cytochrome P450 family. The cofactor is heme.

The protein localises to the endoplasmic reticulum membrane. The protein resides in the microsome membrane. It carries out the reaction an organic molecule + reduced [NADPH--hemoprotein reductase] + O2 = an alcohol + oxidized [NADPH--hemoprotein reductase] + H2O + H(+). Functionally, cytochromes P450 are a group of heme-thiolate monooxygenases. In liver microsomes, this enzyme is involved in an NADPH-dependent electron transport pathway. It oxidizes a variety of structurally unrelated compounds, including steroids, fatty acids, and xenobiotics. In the epoxidation of arachidonic acid it generates only 14,15- and 11,12-cis-epoxyeicosatrienoic acids. The polypeptide is Cytochrome P450 2C2 (CYP2C2) (Oryctolagus cuniculus (Rabbit)).